We begin with the raw amino-acid sequence, 309 residues long: Gamma-hemolysin component A (309 aa).

The first 29 residues, 1–29 (MIKNKILTATLAVGLIAPLANPFIEISKA), serve as a signal peptide directing secretion.

Belongs to the aerolysin family. As to quaternary structure, toxicity requires sequential binding and synergistic association of a class S and a class F component which form heterooligomeric complexes. HlgA (class S) associates with HlgB (class F) thus forming an AB toxin in strains producing both gamma-hemolysins and leukocidins. HlgA and LukF-PV can also form a complex.

The protein resides in the secreted. In terms of biological role, toxin that seems to act by forming pores in the membrane of the cell. Has a hemolytic and a leucotoxic activity. The protein is Gamma-hemolysin component A (hlgA) of Staphylococcus aureus (strain COL).